The sequence spans 128 residues: Gas vesicle protein O (128 aa).

Positions 1 to 49 (MANTPEDTQNTQNDSQNDSQNDSQKDTSARATSARAHQQPQEQPPSPMR) are disordered. The segment covering 7–22 (DTQNTQNDSQNDSQND) has biased composition (low complexity). A compositionally biased stretch (polar residues) spans 29-41 (ARATSARAHQQPQ).

Belongs to the gas vesicle GvpO family.

It localises to the gas vesicle. Its function is as follows. A minor component of the gas vesicle. May play a role in transcription and/or RNA stability and in GV assembly. Gas vesicles are hollow, gas filled proteinaceous nanostructures found in some microorganisms. It is not clear what function gas vesicles perform in soil bacteria. The protein is Gas vesicle protein O of Streptomyces sp. (strain CB03234).